The sequence spans 324 residues: MYG1 protein C694.04c (324 aa).

It belongs to the MYG1 family.

The chain is MYG1 protein C694.04c from Schizosaccharomyces pombe (strain 972 / ATCC 24843) (Fission yeast).